A 326-amino-acid chain; its full sequence is Tetraacyldisaccharide 4'-kinase (326 aa).

ATP is bound at residue 53–60 (SVGGNGKT).

The protein belongs to the LpxK family.

The enzyme catalyses a lipid A disaccharide + ATP = a lipid IVA + ADP + H(+). The protein operates within glycolipid biosynthesis; lipid IV(A) biosynthesis; lipid IV(A) from (3R)-3-hydroxytetradecanoyl-[acyl-carrier-protein] and UDP-N-acetyl-alpha-D-glucosamine: step 6/6. Functionally, transfers the gamma-phosphate of ATP to the 4'-position of a tetraacyldisaccharide 1-phosphate intermediate (termed DS-1-P) to form tetraacyldisaccharide 1,4'-bis-phosphate (lipid IVA). This Actinobacillus pleuropneumoniae serotype 5b (strain L20) protein is Tetraacyldisaccharide 4'-kinase.